Consider the following 915-residue polypeptide: MAMLASKSPFPAPLATSGSGMMAGTAQASYPPSRRAPAVPPASQSFSPTESEFSDSDDHDSPKHWDEDKVCEYLRSVRCGEYEKLFRKNHINGENLLEMDKDVLKEMGIEKVGDRVRLFLSIKKLRTKAIAGQKKRNRDSFAGHESMYTPVSESPSKPFHSSSRVMPNPSVNKRYSRQIDLSGMAYDPSRPTTSSRPTSPLPSADFRTARTRNPYVGQQPTPTGSLRGLGSPPDSQANSRPVLTHTRTDSGMDGSLMAALPQNQDVIRVISTGGVTKVVKIADCNTCEEVMRVTLRKFALREDHERNYCFWVLSGLDPDPKQCRRLGDTELWRVIKDQKRPERNRLILRRVPAGEPGQSELERAAAIAMEEAQQSHSRAMDNVGARSQIKVQKVLGENWDNLQPPLSPVLYQDRERNVYNAARDLERPEPLDSGRLQPRRKVLRSFGGLRPPSELIASDLTTYFPDHPREDIDRTARLSMRRSARLSKVNSRLSVASSFSMASSIQDAPPIPTIADSWLQSTPLPKARPRDLQSRLQHGYRDSVASSMLDTLQEEGSPIEPNRKSYVSFADSGSDSAAVSVTDPDGNIVRHSYFDEGSTIGSGSGSGSFGDVSKALNEDGEDADEDLQSFLSGESWDDSKWMKGALIGQGSFGCVYLALHAITGELLAVKQVEAPSPGANSQNDARKKSMIEALKREISLLRDLRHPNIVQYLGCGSSAEYLNIFLEYVPGGSVQTMLNSYGALPEPLVRSFVRQILNGLSYLHEREIIHRDIKGANILVDNKGTIKISDFGISKKIEATNLLNGANNNKHRPSLQGSVFWMAPEVVKQTSYTRKADIWSLGCLVVEMMTGTHPFPDCTQLQAIFKIGGGKATPTIPEDASTEAKAFLAQTFEMDHNKRPSADDLMLSPFLTPIT.

Disordered stretches follow at residues 1–65 (MAML…PKHW), 134–171 (KKRNRDSFAGHESMYTPVSESPSKPFHSSSRVMPNPSV), and 183–249 (GMAY…TRTD). A compositionally biased stretch (low complexity) spans 26-45 (AQASYPPSRRAPAVPPASQS). Residues 65–128 (WDEDKVCEYL…FLSIKKLRTK (64 aa)) enclose the SAM domain. Low complexity-rich tracts occupy residues 152–163 (SESPSKPFHSSS) and 188–203 (PSRPTTSSRPTSPLPS). The 91-residue stretch at 263-353 (NQDVIRVIST…NRLILRRVPA (91 aa)) folds into the Ras-associating domain. One can recognise a Protein kinase domain in the interval 641–911 (WMKGALIGQG…ADDLMLSPFL (271 aa)). ATP-binding positions include 647-655 (IGQGSFGCV) and K670.

It belongs to the protein kinase superfamily. STE Ser/Thr protein kinase family. MAP kinase kinase kinase subfamily. In terms of assembly, interacts with the adapter protein MST50.

The enzyme catalyses L-seryl-[protein] + ATP = O-phospho-L-seryl-[protein] + ADP + H(+). It carries out the reaction L-threonyl-[protein] + ATP = O-phospho-L-threonyl-[protein] + ADP + H(+). Functionally, mitogen-activated protein kinase kinase kinase; part of the MST11-MST7-PMK1 MAP kinase (MAPK) cascade that is essential for appressorium formation, penetration and invasive growth. The MST11-MST7-PMK1 MAP kinase cascade transduces signals from the cell surface sensors MDB2 and SHO1 that recognize various surface signals such as surface hydrophobicity, cutin monomers, and rice leaf waxes. MST11 acts as the upstream MAPKKK that directly phosphorylates MAPKK MST7. MST11 but not MST7 may also be involved in the OSM1 MAPK pathway in response to osmotic stresses. This is Mitogen-activated protein kinase kinae kinase MST11 from Pyricularia oryzae (strain 70-15 / ATCC MYA-4617 / FGSC 8958) (Rice blast fungus).